The chain runs to 119 residues: Auxin-responsive protein SAUR78 (119 aa).

The protein belongs to the ARG7 family.

Functionally, may be involved in the regulation of ethylene receptor signaling. Promotes cell expansion and plant growth. In Arabidopsis thaliana (Mouse-ear cress), this protein is Auxin-responsive protein SAUR78.